Reading from the N-terminus, the 345-residue chain is Phenylalanine--tRNA ligase alpha subunit (345 aa).

Residue glutamate 262 coordinates Mg(2+).

Belongs to the class-II aminoacyl-tRNA synthetase family. Phe-tRNA synthetase alpha subunit type 1 subfamily. As to quaternary structure, tetramer of two alpha and two beta subunits. Mg(2+) serves as cofactor.

The protein resides in the cytoplasm. The enzyme catalyses tRNA(Phe) + L-phenylalanine + ATP = L-phenylalanyl-tRNA(Phe) + AMP + diphosphate + H(+). This chain is Phenylalanine--tRNA ligase alpha subunit, found in Ehrlichia canis (strain Jake).